The following is a 381-amino-acid chain: Teichoic acid glycerol-phosphate primase (381 aa).

It belongs to the CDP-glycerol glycerophosphotransferase family.

The protein resides in the cell membrane. It carries out the reaction N-acetyl-beta-D-mannosaminyl-(1-&gt;4)-N-acetyl-alpha-D-glucosaminyl di-trans,octa-cis-undecaprenyl diphosphate + CDP-glycerol = 4-O-[(2R)-glycerylphospho]-N-acetyl-beta-D-mannosaminyl-(1-&gt;4)-N-acetyl-alpha-D-glucosaminyl di-trans,octa-cis-undecaprenyl diphosphate + CMP + H(+). It functions in the pathway cell wall biogenesis; poly(glycerol phosphate) teichoic acid biosynthesis. In terms of biological role, catalyzes the addition of a single glycerol phosphate residue to the prenoldiphosphate-linked disaccharide, as a primer for polymerisation by TagF. This is Teichoic acid glycerol-phosphate primase (tagB) from Bacillus subtilis (strain 168).